Here is a 423-residue protein sequence, read N- to C-terminus: Transcription factor IIIB 50 kDa subunit (423 aa).

The TFIIB-type zinc-finger motif lies at Met-1 to Ser-34. Zn(2+) contacts are provided by Cys-5, Cys-8, Cys-26, and Cys-29. Copy 2 of the repeat occupies Leu-171–Lys-245. Residues Gln-325–Ser-340 show a composition bias toward low complexity. The segment at Gln-325 to Leu-358 is disordered. Cysteine sulfenic acid (-SOH) is present on Cys-373.

Belongs to the TFIIB family. In terms of assembly, component of TFIIIB complexes. Interacts with TBP and forms a ternary complex with TBp and target DNA sequences. In terms of processing, in response to oxidative stress, a Cys-residue is reversibly oxidized to cysteine sulfenic acid. This impairs formation of a ternary complex with TBP and DNA and down-regulates expression of target genes in response to oxidative stress.

It localises to the nucleus. Functionally, general activator of RNA polymerase III transcription. Factor exclusively required for RNA polymerase III transcription of genes with promoter elements upstream of the initiation sites. Contributes to the regulation of gene expression; functions as activator in the absence of oxidative stress. Down-regulates expression of target genes in response to oxidative stress. Overexpression protects cells against apoptosis in response to oxidative stress. The polypeptide is Transcription factor IIIB 50 kDa subunit (brf2) (Danio rerio (Zebrafish)).